We begin with the raw amino-acid sequence, 184 residues long: (2E)-enoyl-[ACP] glycyltransferase (184 aa).

Belongs to the FcoT family.

The catalysed reaction is a (3R)-3-[(carboxymethyl)amino]fatty acid + holo-[ACP] + H(+) = a (2E)-enoyl-[ACP] + glycine + H2O. It catalyses the reaction (3R)-3-[(carboxylmethyl)amino]decanoate + holo-[ACP] + H(+) = (2E)-decenoyl-[ACP] + glycine + H2O. Involved in the biosynthesis of a unique class of isonitrile lipopeptides (INLPs) that seem to play a role in metal acquisition in M.marinum. Catalyzes a Michael addition of glycine to the beta-position of an alpha,beta-unsaturated fatty acyl-[ACP], producing a (3R)-3-[(carboxymethyl)amino]fatty acid. Acts on the (2E)-decenoyl moiety loaded on the acyl-carrier protein MmaB, forming the product (3R)-3-[(carboxymethyl)amino]decanoate released from MmaB. In Mycobacterium marinum (strain ATCC BAA-535 / M), this protein is (2E)-enoyl-[ACP] glycyltransferase.